The sequence spans 445 residues: Sterile alpha motif domain-containing protein 7 (445 aa).

The required for localization to nuclear polycomb bodies stretch occupies residues 98–172 (HAARAEMEMY…HLQGNPILLA (75 aa)). The disordered stretch occupies residues 193–282 (YQKPPESDTE…WDDGKGKPSE (90 aa)). Positions 227 to 244 (IKDPDIEVDNQQKPRVAD) are enriched in basic and acidic residues. One can recognise an SAM domain in the interval 324–378 (WTVDDVYNFIRSLPGCSDYAQVFKDHAIDGETLPLLTEQHLRGTMGLKLGPALKI). Residues 425-445 (SIPGPQDLLSPKRTEQDVMRN) form a disordered region. The span at 434–445 (SPKRTEQDVMRN) shows a compositional bias: basic and acidic residues.

In terms of assembly, monomer, homodimer and homooligomer. Component of a Polycomb group (PcG) multiprotein PRC1-like complex. Interacts with PHC2 and NR2E3. Interacts with RNF1 in a PHC2-dependent manner. Interacts with SAMD11. Expressed in the retina and the pineal gland. In the retina, it is predominantly expressed in the outer nuclear layer and developing rod photoreceptors.

The protein resides in the nucleus. It is found in the cytoplasm. Component of a Polycomb group (PcG) multiprotein PRC1-like complex, essential for establishing rod photoreceptor cell identity and function by silencing nonrod gene expression in developing rod photoreceptor cells. Via its association with the PRC1-like complex, promotes epigenetic repressive marks H3K27me3 and H2AK119ub marks in nonrod genes, silencing their transcription. Represses Crx-controlled photoreceptor-specific gene expression. The protein is Sterile alpha motif domain-containing protein 7 (Samd7) of Mus musculus (Mouse).